The chain runs to 132 residues: Small ribosomal subunit protein uS11 (132 aa).

Belongs to the universal ribosomal protein uS11 family. Part of the 30S ribosomal subunit. Interacts with proteins S7 and S18. Binds to IF-3.

Located on the platform of the 30S subunit, it bridges several disparate RNA helices of the 16S rRNA. Forms part of the Shine-Dalgarno cleft in the 70S ribosome. The sequence is that of Small ribosomal subunit protein uS11 from Chlamydia trachomatis serovar D (strain ATCC VR-885 / DSM 19411 / UW-3/Cx).